A 242-amino-acid chain; its full sequence is High mobility group protein homolog (242 aa).

DNA-binding regions (HMG box) lie at residues 54–122 and 126–197; these read PKRN…EANK and KPVK…IDKE.

It localises to the host nucleus. The protein is High mobility group protein homolog (EF1) of Acheta domesticus (House cricket).